Reading from the N-terminus, the 107-residue chain is Nucleoid-associated protein CE0210 (107 aa).

This sequence belongs to the YbaB/EbfC family. In terms of assembly, homodimer.

The protein resides in the cytoplasm. Its subcellular location is the nucleoid. In terms of biological role, binds to DNA and alters its conformation. May be involved in regulation of gene expression, nucleoid organization and DNA protection. The chain is Nucleoid-associated protein CE0210 from Corynebacterium efficiens (strain DSM 44549 / YS-314 / AJ 12310 / JCM 11189 / NBRC 100395).